We begin with the raw amino-acid sequence, 473 residues long: 3-isopropylmalate dehydratase large subunit (473 aa).

[4Fe-4S] cluster is bound by residues cysteine 354, cysteine 414, and cysteine 417.

This sequence belongs to the aconitase/IPM isomerase family. LeuC type 1 subfamily. In terms of assembly, heterodimer of LeuC and LeuD. The cofactor is [4Fe-4S] cluster.

It catalyses the reaction (2R,3S)-3-isopropylmalate = (2S)-2-isopropylmalate. It functions in the pathway amino-acid biosynthesis; L-leucine biosynthesis; L-leucine from 3-methyl-2-oxobutanoate: step 2/4. Functionally, catalyzes the isomerization between 2-isopropylmalate and 3-isopropylmalate, via the formation of 2-isopropylmaleate. The protein is 3-isopropylmalate dehydratase large subunit of Mycobacterium bovis (strain ATCC BAA-935 / AF2122/97).